The chain runs to 179 residues: Probable F-box protein At3g25550 (179 aa).

The region spanning 19-55 (IPNDDVLEEIIVRLPVKTLTRFQTVSKHWRHTIKSRN) is the F-box domain.

In Arabidopsis thaliana (Mouse-ear cress), this protein is Probable F-box protein At3g25550.